A 432-amino-acid chain; its full sequence is Glutamate-1-semialdehyde 2,1-aminomutase (432 aa).

The residue at position 266 (lysine 266) is an N6-(pyridoxal phosphate)lysine.

It belongs to the class-III pyridoxal-phosphate-dependent aminotransferase family. HemL subfamily. In terms of assembly, homodimer. Pyridoxal 5'-phosphate is required as a cofactor.

The protein resides in the cytoplasm. The enzyme catalyses (S)-4-amino-5-oxopentanoate = 5-aminolevulinate. It participates in porphyrin-containing compound metabolism; protoporphyrin-IX biosynthesis; 5-aminolevulinate from L-glutamyl-tRNA(Glu): step 2/2. This Janthinobacterium sp. (strain Marseille) (Minibacterium massiliensis) protein is Glutamate-1-semialdehyde 2,1-aminomutase.